A 138-amino-acid chain; its full sequence is Ostreolysin A6 (138 aa).

This sequence belongs to the aegerolysin family. Monomer.

Has hemolytic activity against bovine erythrocytes at nanomolar concentrations in vitro. Promotes active pleurotolysin B (PlyB)-dependent permeabilization of membranes rich in cholesterol and sphingomyelin. May play an important role in the initial phase of fungal fruiting. The protein is Ostreolysin A6 (OlyA6) of Pleurotus ostreatus (Oyster mushroom).